Consider the following 611-residue polypeptide: Phosphoenolpyruvate carboxykinase [GTP] (611 aa).

Residues arginine 82 and 222-224 each bind substrate; that span reads YGG. 2 residues coordinate Mn(2+): lysine 231 and histidine 251. Substrate is bound at residue serine 273. 274–279 is a binding site for GTP; sequence ACGKTN. Cysteine 275 is an active-site residue. Aspartate 298 provides a ligand contact to Mn(2+). Residue 389 to 391 coordinates substrate; the sequence is NSR. Residues arginine 391, arginine 422, and 517–520 contribute to the GTP site; that span reads FGDN.

Belongs to the phosphoenolpyruvate carboxykinase [GTP] family. As to quaternary structure, monomer. Mn(2+) serves as cofactor.

The protein resides in the cytoplasm. It carries out the reaction oxaloacetate + GTP = phosphoenolpyruvate + GDP + CO2. It functions in the pathway carbohydrate biosynthesis; gluconeogenesis. Catalyzes the conversion of oxaloacetate (OAA) to phosphoenolpyruvate (PEP), the rate-limiting step in the metabolic pathway that produces glucose from lactate and other precursors derived from the citric acid cycle. This Arthrobacter sp. (strain FB24) protein is Phosphoenolpyruvate carboxykinase [GTP].